The chain runs to 106 residues: ATP-dependent Clp protease adapter protein ClpS (106 aa).

Residues 1 to 10 are compositionally biased toward basic and acidic residues; the sequence is MSQKTVHDQD. Positions 1-22 are disordered; that stretch reads MSQKTVHDQDNALLLETGNTKV.

Belongs to the ClpS family. In terms of assembly, binds to the N-terminal domain of the chaperone ClpA.

Involved in the modulation of the specificity of the ClpAP-mediated ATP-dependent protein degradation. This Xylella fastidiosa (strain 9a5c) protein is ATP-dependent Clp protease adapter protein ClpS.